A 206-amino-acid polypeptide reads, in one-letter code: Large ribosomal subunit protein bL25 (206 aa).

The protein belongs to the bacterial ribosomal protein bL25 family. CTC subfamily. In terms of assembly, part of the 50S ribosomal subunit; part of the 5S rRNA/L5/L18/L25 subcomplex. Contacts the 5S rRNA. Binds to the 5S rRNA independently of L5 and L18.

Functionally, this is one of the proteins that binds to the 5S RNA in the ribosome where it forms part of the central protuberance. In Bartonella henselae (strain ATCC 49882 / DSM 28221 / CCUG 30454 / Houston 1) (Rochalimaea henselae), this protein is Large ribosomal subunit protein bL25.